Here is a 72-residue protein sequence, read N- to C-terminus: Translation initiation factor IF-1 (72 aa).

Positions 1–72 (MAKEDVIEVE…TRGRITYRYK (72 aa)) constitute an S1-like domain. A Phosphotyrosine modification is found at Tyr60.

The protein belongs to the IF-1 family. Component of the 30S ribosomal translation pre-initiation complex which assembles on the 30S ribosome in the order IF-2 and IF-3, IF-1 and N-formylmethionyl-tRNA(fMet); mRNA recruitment can occur at any time during PIC assembly.

The protein localises to the cytoplasm. Functionally, one of the essential components for the initiation of protein synthesis. Stabilizes the binding of IF-2 and IF-3 on the 30S subunit to which N-formylmethionyl-tRNA(fMet) subsequently binds. Helps modulate mRNA selection, yielding the 30S pre-initiation complex (PIC). Upon addition of the 50S ribosomal subunit IF-1, IF-2 and IF-3 are released leaving the mature 70S translation initiation complex. The polypeptide is Translation initiation factor IF-1 (Shouchella clausii (strain KSM-K16) (Alkalihalobacillus clausii)).